The primary structure comprises 273 residues: Ribosomal protein L11 methyltransferase (273 aa).

4 residues coordinate S-adenosyl-L-methionine: Thr112, Gly133, Asp155, and Asn203.

Belongs to the methyltransferase superfamily. PrmA family.

It is found in the cytoplasm. The catalysed reaction is L-lysyl-[protein] + 3 S-adenosyl-L-methionine = N(6),N(6),N(6)-trimethyl-L-lysyl-[protein] + 3 S-adenosyl-L-homocysteine + 3 H(+). Functionally, methylates ribosomal protein L11. The sequence is that of Ribosomal protein L11 methyltransferase from Deinococcus radiodurans (strain ATCC 13939 / DSM 20539 / JCM 16871 / CCUG 27074 / LMG 4051 / NBRC 15346 / NCIMB 9279 / VKM B-1422 / R1).